Consider the following 179-residue polypeptide: Cytochrome b6-f complex iron-sulfur subunit (179 aa).

Residues 20–42 (LLTFGTITGVAAGALYPIVKYFI) traverse the membrane as a helical segment. The region spanning 60–161 (GNDVIVSQFL…ANVTDNDKVV (102 aa)) is the Rieske domain. [2Fe-2S] cluster contacts are provided by Cys-107, His-109, Cys-125, and His-128. A disulfide bridge links Cys-112 with Cys-127.

The protein belongs to the Rieske iron-sulfur protein family. The 4 large subunits of the cytochrome b6-f complex are cytochrome b6, subunit IV (17 kDa polypeptide, PetD), cytochrome f and the Rieske protein, while the 4 small subunits are PetG, PetL, PetM and PetN. The complex functions as a dimer. It depends on [2Fe-2S] cluster as a cofactor.

It is found in the cellular thylakoid membrane. It catalyses the reaction 2 oxidized [plastocyanin] + a plastoquinol + 2 H(+)(in) = 2 reduced [plastocyanin] + a plastoquinone + 4 H(+)(out). Its function is as follows. Component of the cytochrome b6-f complex, which mediates electron transfer between photosystem II (PSII) and photosystem I (PSI), cyclic electron flow around PSI, and state transitions. The sequence is that of Cytochrome b6-f complex iron-sulfur subunit from Microcystis aeruginosa (strain NIES-843 / IAM M-2473).